A 731-amino-acid polypeptide reads, in one-letter code: Bifunctional trehalose-6-phosphate synthase/phosphatase (731 aa).

The interval 1 to 464 (MRLIVVSNRL…WGTDFIYSLI (464 aa)) is alpha,alpha-trehalose-phosphate synthase. D-glucose 6-phosphate is bound at residue Arg9. 25–26 (GG) lines the UDP-alpha-D-glucose pocket. Residues Tyr89 and Asp143 each coordinate D-glucose 6-phosphate. Residues Arg276 and Lys281 each contribute to the UDP-alpha-D-glucose site. Arg314 contacts D-glucose 6-phosphate. 379–383 (LVAKE) contacts UDP-alpha-D-glucose. The tract at residues 465–731 (SAKSAREEVE…RSLLEQLRPP (267 aa)) is trehalose-6-phosphate phosphatase. The active-site Nucleophile is the Asp503. Residues Asp503, Asp505, and Asp684 each contribute to the Mg(2+) site. Residue 503–505 (DYD) participates in alpha,alpha-trehalose 6-phosphate binding.

It in the N-terminal section; belongs to the glycosyltransferase 20 family. In the C-terminal section; belongs to the trehalose phosphatase family. May interact with the putative glycosyltransferase (GT) TTX_1305. TTX_1305 is required for the trehalose-6-phosphate synthase activity of tpsp. Mg(2+) is required as a cofactor.

The catalysed reaction is D-glucose 6-phosphate + UDP-alpha-D-glucose = alpha,alpha-trehalose 6-phosphate + UDP + H(+). It carries out the reaction alpha,alpha-trehalose 6-phosphate + H2O = alpha,alpha-trehalose + phosphate. The protein operates within glycan biosynthesis; trehalose biosynthesis. Bifunctional enzyme which catalyzes the transfer of glucose from UDP-alpha-D-glucose to glucose-6-phosphate to form trehalose-6-phosphate (Tre6P) and removes the phosphate from Tre6P to produce free trehalose. This Thermoproteus tenax (strain ATCC 35583 / DSM 2078 / JCM 9277 / NBRC 100435 / Kra 1) protein is Bifunctional trehalose-6-phosphate synthase/phosphatase.